The following is a 371-amino-acid chain: 4-hydroxybutyrate dehydrogenase (371 aa).

Residues 88-92 (GSVID), 126-130 (TTCGT), and Lys148 contribute to the NAD(+) site. Fe cation-binding residues include Asp182, His186, His253, and His267. Residue His267 coordinates NAD(+).

Belongs to the iron-containing alcohol dehydrogenase family. Homodimer. Requires Fe(2+) as cofactor. Cu(2+) is required as a cofactor.

The catalysed reaction is 4-hydroxybutanoate + NAD(+) = succinate semialdehyde + NADH + H(+). Inactivated by oxygen. In terms of biological role, involved in the anaerobic succinate degradation pathway. Catalyzes the interconversion of gamma-hydroxybutyrate (GHB) and succinic semialdehyde (SSA). In Clostridium kluyveri (strain ATCC 8527 / DSM 555 / NBRC 12016 / NCIMB 10680 / K1), this protein is 4-hydroxybutyrate dehydrogenase.